The following is a 128-amino-acid chain: MNYTVLVTGSAYGTQNASTAFLFCQSLIKMSHILNSVFFYCDGVLNANNFNKPSVDEFDLLSAWKQLNEKNKVKLYVCVSAASRRGVIEDEKISNTKIKNGNFASFFQSSGLLELAYSIKISDRIIQF.

Cys-78 (cysteine persulfide intermediate) is an active-site residue.

Belongs to the DsrE/TusD family. In terms of assembly, heterohexamer, formed by a dimer of trimers. The hexameric TusBCD complex contains 2 copies each of TusB, TusC and TusD. The TusBCD complex interacts with TusE.

The protein resides in the cytoplasm. Functionally, part of a sulfur-relay system required for 2-thiolation of 5-methylaminomethyl-2-thiouridine (mnm(5)s(2)U) at tRNA wobble positions. Accepts sulfur from TusA and transfers it in turn to TusE. The chain is Sulfurtransferase TusD from Buchnera aphidicola subsp. Schizaphis graminum (strain Sg).